Here is a 285-residue protein sequence, read N- to C-terminus: 2-dehydro-3-deoxyphosphooctonate aldolase (285 aa).

This sequence belongs to the KdsA family.

Its subcellular location is the cytoplasm. It catalyses the reaction D-arabinose 5-phosphate + phosphoenolpyruvate + H2O = 3-deoxy-alpha-D-manno-2-octulosonate-8-phosphate + phosphate. It functions in the pathway carbohydrate biosynthesis; 3-deoxy-D-manno-octulosonate biosynthesis; 3-deoxy-D-manno-octulosonate from D-ribulose 5-phosphate: step 2/3. It participates in bacterial outer membrane biogenesis; lipopolysaccharide biosynthesis. The protein is 2-dehydro-3-deoxyphosphooctonate aldolase of Acinetobacter baumannii (strain SDF).